The chain runs to 109 residues: MPLYEFTFIAQQGLTQYELEGLVKGLSSLLTKNGAELLKYEYWGLLDFAYTIDKMNKGHYCMIYIKATPSSMDEFKRKVRLNEDILRFLCLKKDKLPKGDSLMIQASQV.

The protein belongs to the bacterial ribosomal protein bS6 family.

Functionally, binds together with bS18 to 16S ribosomal RNA. The chain is Small ribosomal subunit protein bS6 from Ehrlichia chaffeensis (strain ATCC CRL-10679 / Arkansas).